The chain runs to 296 residues: tRNA dimethylallyltransferase (296 aa).

11–18 (GPTAVGKT) serves as a coordination point for ATP. A substrate-binding site is contributed by 13–18 (TAVGKT). The interaction with substrate tRNA stretch occupies residues 36 to 39 (DSQQ).

It belongs to the IPP transferase family. In terms of assembly, monomer. Mg(2+) serves as cofactor.

The enzyme catalyses adenosine(37) in tRNA + dimethylallyl diphosphate = N(6)-dimethylallyladenosine(37) in tRNA + diphosphate. In terms of biological role, catalyzes the transfer of a dimethylallyl group onto the adenine at position 37 in tRNAs that read codons beginning with uridine, leading to the formation of N6-(dimethylallyl)adenosine (i(6)A). The polypeptide is tRNA dimethylallyltransferase (Streptococcus equi subsp. equi (strain 4047)).